Here is a 230-residue protein sequence, read N- to C-terminus: Small ribosomal subunit protein uS3 (230 aa).

The KH type-2 domain maps to valine 39–lysine 107.

Belongs to the universal ribosomal protein uS3 family. As to quaternary structure, part of the 30S ribosomal subunit. Forms a tight complex with proteins S10 and S14.

Its function is as follows. Binds the lower part of the 30S subunit head. Binds mRNA in the 70S ribosome, positioning it for translation. This chain is Small ribosomal subunit protein uS3, found in Vesicomyosocius okutanii subsp. Calyptogena okutanii (strain HA).